The primary structure comprises 148 residues: Large ribosomal subunit protein bL9 (148 aa).

Belongs to the bacterial ribosomal protein bL9 family.

Binds to the 23S rRNA. The polypeptide is Large ribosomal subunit protein bL9 (Streptomyces griseus subsp. griseus (strain JCM 4626 / CBS 651.72 / NBRC 13350 / KCC S-0626 / ISP 5235)).